A 361-amino-acid polypeptide reads, in one-letter code: Cobalt-precorrin-5B C(1)-methyltransferase (361 aa).

The protein belongs to the CbiD family.

The enzyme catalyses Co-precorrin-5B + S-adenosyl-L-methionine = Co-precorrin-6A + S-adenosyl-L-homocysteine. It functions in the pathway cofactor biosynthesis; adenosylcobalamin biosynthesis; cob(II)yrinate a,c-diamide from sirohydrochlorin (anaerobic route): step 6/10. In terms of biological role, catalyzes the methylation of C-1 in cobalt-precorrin-5B to form cobalt-precorrin-6A. The sequence is that of Cobalt-precorrin-5B C(1)-methyltransferase from Methanobrevibacter smithii (strain ATCC 35061 / DSM 861 / OCM 144 / PS).